A 214-amino-acid polypeptide reads, in one-letter code: Neurogenin-3 (214 aa).

Residues 1–14 (MTPQPSGAPTVQVT) show a composition bias toward polar residues. Positions 1–98 (MTPQPSGAPT…NDRERNRMHN (98 aa)) are disordered. The span at 15–26 (RETERSFPRASE) shows a compositional bias: basic and acidic residues. Composition is skewed to basic residues over residues 57 to 70 (APRK…GRSR) and 79 to 88 (KQRRSRRKKA). The bHLH domain occupies 83–135 (SRRKKANDRERNRMHNLNSALDALRGVLPTFPDDAKLTKIETLRFAHNYIWAL).

In terms of assembly, efficient DNA binding requires dimerization with another bHLH protein. Interacts with ATOH8.

It is found in the nucleus. Functionally, acts as a transcriptional regulator. Together with NKX2-2, initiates transcriptional activation of NEUROD1. Involved in neurogenesis. Also required for the specification of a common precursor of the 4 pancreatic endocrine cell types. The chain is Neurogenin-3 (NEUROG3) from Homo sapiens (Human).